The chain runs to 61 residues: Metallothionein-1 (61 aa).

An N-acetylmethionine modification is found at Met-1. Residues 1–29 (MDPNCSCPTGGSCTCAGSCKCKACRCPSC) are beta. A divalent metal cation contacts are provided by Cys-5, Cys-7, Cys-13, Cys-15, Cys-19, Cys-21, Cys-24, Cys-26, Cys-29, Cys-33, Cys-34, Cys-36, Cys-37, Cys-41, Cys-44, Cys-48, Cys-50, Cys-57, Cys-59, and Cys-60. The interval 30–61 (KKSCCSCCPVGCAKCAQGCVCKGASDKCSCCA) is alpha.

Belongs to the metallothionein superfamily. Type 1 family. Monomer.

Metallothioneins have a high content of cysteine residues that bind various heavy metals; these proteins are transcriptionally regulated by both heavy metals and glucocorticoids. This is Metallothionein-1 (MT1) from Bos taurus (Bovine).